The primary structure comprises 35 residues: MEALVYTFLLVSTLGIIFFAIFFREPPXILTKKTK.

The helical transmembrane segment at 3–23 threads the bilayer; the sequence is ALVYTFLLVSTLGIIFFAIFF.

It belongs to the PsbT family. As to quaternary structure, PSII is composed of 1 copy each of membrane proteins PsbA, PsbB, PsbC, PsbD, PsbE, PsbF, PsbH, PsbI, PsbJ, PsbK, PsbL, PsbM, PsbT, PsbY, PsbZ, Psb30/Ycf12, at least 3 peripheral proteins of the oxygen-evolving complex and a large number of cofactors. It forms dimeric complexes.

The protein resides in the plastid. The protein localises to the chloroplast thylakoid membrane. Found at the monomer-monomer interface of the photosystem II (PS II) dimer, plays a role in assembly and dimerization of PSII. PSII is a light-driven water plastoquinone oxidoreductase, using light energy to abstract electrons from H(2)O, generating a proton gradient subsequently used for ATP formation. This chain is Photosystem II reaction center protein T, found in Asarum canadense (Wild ginger).